A 206-amino-acid chain; its full sequence is Uridine kinase (206 aa).

11 to 18 (GGSASGKT) contributes to the ATP binding site.

The protein belongs to the uridine kinase family.

The protein localises to the cytoplasm. The enzyme catalyses uridine + ATP = UMP + ADP + H(+). It catalyses the reaction cytidine + ATP = CMP + ADP + H(+). Its pathway is pyrimidine metabolism; CTP biosynthesis via salvage pathway; CTP from cytidine: step 1/3. It functions in the pathway pyrimidine metabolism; UMP biosynthesis via salvage pathway; UMP from uridine: step 1/1. This is Uridine kinase from Lactococcus lactis subsp. cremoris (strain MG1363).